Here is a 214-residue protein sequence, read N- to C-terminus: Hypoxanthine-guanine phosphoribosyltransferase (214 aa).

Ala-2 bears the N-acetylalanine mark. Lys-69 is a binding site for GMP. Lys-103 is modified (N6-acetyllysine). A Glycyl lysine isopeptide (Lys-Gly) (interchain with G-Cter in SUMO1); alternate cross-link involves residue Lys-115. Lys-115 participates in a covalent cross-link: Glycyl lysine isopeptide (Lys-Gly) (interchain with G-Cter in SUMO2); alternate. Residues Glu-134 to Thr-142, Lys-166, Lys-186 to Val-188, and Asp-194 each bind GMP. Asp-138 acts as the Proton acceptor in catalysis. Phosphothreonine is present on Thr-142. Asp-194 provides a ligand contact to Mg(2+).

Belongs to the purine/pyrimidine phosphoribosyltransferase family. As to quaternary structure, homotetramer. It depends on Mg(2+) as a cofactor.

The protein resides in the cytoplasm. It catalyses the reaction IMP + diphosphate = hypoxanthine + 5-phospho-alpha-D-ribose 1-diphosphate. The catalysed reaction is GMP + diphosphate = guanine + 5-phospho-alpha-D-ribose 1-diphosphate. The protein operates within purine metabolism; IMP biosynthesis via salvage pathway; IMP from hypoxanthine: step 1/1. Functionally, converts guanine to guanosine monophosphate, and hypoxanthine to inosine monophosphate. Transfers the 5-phosphoribosyl group from 5-phosphoribosylpyrophosphate onto the purine. Plays a central role in the generation of purine nucleotides through the purine salvage pathway. This is Hypoxanthine-guanine phosphoribosyltransferase (Hprt1) from Mus spretus (Western Mediterranean mouse).